Here is a 689-residue protein sequence, read N- to C-terminus: Protein CFAP20DC (689 aa).

Disordered stretches follow at residues 241–263, 333–423, and 584–659; these read LKST…NRIE, SKES…GPSE, and ISTS…DLSV. Composition is skewed to polar residues over residues 251-260 and 343-359; these read TPSGSSSGNN and EESQ…SSRP. Residues 394–405 are compositionally biased toward acidic residues; it reads SEDDFYGGDSSE. Positions 409-421 are enriched in polar residues; the sequence is HSIQGSRGPTTGP. Residues 584–593 are compositionally biased toward low complexity; that stretch reads ISTSSDDTTT.

The polypeptide is Protein CFAP20DC (Homo sapiens (Human)).